We begin with the raw amino-acid sequence, 260 residues long: MEDVQSHAPQIPLNIDRVGVRELRLPLLVRDRTRGTQQTVASVDLGVDLPSEFKGTHMSRFVEALEQWNDEISYQSVRRLLQDIRQRLEARRAYARFCFPYFISKAAPASGSPALVSYQCRLTGELDDAGQHFILEVDVPVMTVCPCSKAISNEGAHSQRAMVRMRLRMKAFSWLEDFIDIAEASGSSAVYTLLKREDEKYVTEHAFAHPTFVEDVVRNVAQRLSEHGQVEWFSVEVESMESIHNHNAFARIERHISDRS.

This sequence belongs to the GTP cyclohydrolase IV family.

It carries out the reaction GTP + H2O = 7,8-dihydroneopterin 3'-triphosphate + formate + H(+). Its pathway is cofactor biosynthesis; 7,8-dihydroneopterin triphosphate biosynthesis; 7,8-dihydroneopterin triphosphate from GTP: step 1/1. Functionally, converts GTP to 7,8-dihydroneopterin triphosphate. The protein is GTP cyclohydrolase FolE2 of Desulfovibrio desulfuricans (strain ATCC 27774 / DSM 6949 / MB).